The sequence spans 358 residues: 3-dehydroquinate synthase (358 aa).

Residues 69-74, 103-107, 127-128, K140, K149, and 167-170 each bind NAD(+); these read DGEQYK, GVIGD, TT, and TLNT. Positions 182, 245, and 262 each coordinate Zn(2+).

The protein belongs to the sugar phosphate cyclases superfamily. Dehydroquinate synthase family. It depends on Co(2+) as a cofactor. The cofactor is Zn(2+). Requires NAD(+) as cofactor.

It localises to the cytoplasm. The catalysed reaction is 7-phospho-2-dehydro-3-deoxy-D-arabino-heptonate = 3-dehydroquinate + phosphate. The protein operates within metabolic intermediate biosynthesis; chorismate biosynthesis; chorismate from D-erythrose 4-phosphate and phosphoenolpyruvate: step 2/7. In terms of biological role, catalyzes the conversion of 3-deoxy-D-arabino-heptulosonate 7-phosphate (DAHP) to dehydroquinate (DHQ). In Hydrogenovibrio crunogenus (strain DSM 25203 / XCL-2) (Thiomicrospira crunogena), this protein is 3-dehydroquinate synthase.